The chain runs to 44 residues: Antimicrobial peptide 2 (44 aa).

Disulfide bonds. In terms of tissue distribution, expressed in flowers but not in leaves, seeds or roots (at protein level).

Functionally, antimicrobial peptide. Active against fungal species B.cinerea (IC(50)=5.2 uM), A.niger (IC(50)=2.6 uM) and B.sorokinina (IC(50)=5.2 uM) but not against F.oxysporum, F.graminearum and P.debaryanum at concentrations below 10 uM. Inhibits growth of P.infestans at concentration between 1.3 uM and 5.2 uM. Active against bacterial species P.syringae, B.subtilis, X.campestris and C.michiganense. In Taraxacum officinale (Common dandelion), this protein is Antimicrobial peptide 2.